The sequence spans 135 residues: 6-pyruvoyl tetrahydrobiopterin synthase (135 aa).

Histidine 17 is a Zn(2+) binding site. The active-site Proton acceptor is cysteine 36. The Zn(2+) site is built by histidine 40 and histidine 42. Catalysis depends on charge relay system residues histidine 81 and glutamate 124.

Belongs to the PTPS family. Homohexamer formed of two homotrimers in a head to head fashion. Requires Zn(2+) as cofactor.

The enzyme catalyses 7,8-dihydroneopterin 3'-triphosphate = 6-pyruvoyl-5,6,7,8-tetrahydropterin + triphosphate + H(+). It participates in cofactor biosynthesis; tetrahydrobiopterin biosynthesis; tetrahydrobiopterin from 7,8-dihydroneopterin triphosphate: step 1/3. Functionally, involved in the biosynthesis of tetrahydrobiopterin, an essential cofactor of aromatic amino acid hydroxylases. Catalyzes the transformation of 7,8-dihydroneopterin triphosphate into 6-pyruvoyl tetrahydropterin. In Dictyostelium discoideum (Social amoeba), this protein is 6-pyruvoyl tetrahydrobiopterin synthase (ptsA).